The primary structure comprises 170 residues: uncharacterized protein (170 aa).

A coiled-coil region spans residues 15 to 81 (EAFDEKAEKE…EREKSKSAVS (67 aa)). Over residues 20-77 (KAEKEKVEKEKALKEKTEKEKAEKEKAEKEKVEKEKAEKEKAAKEKAAKEKAEREKSK) the composition is skewed to basic and acidic residues. The disordered stretch occupies residues 20–95 (KAEKEKVEKE…NQNSNKGNVE (76 aa)). The segment covering 78–92 (SAVSPATTNQNSNKG) has biased composition (polar residues). Residues 98 to 118 (VAIGVLAGGAVTGVAVGGAYL) form a helical membrane-spanning segment.

The protein localises to the membrane. This is an uncharacterized protein from Dictyostelium discoideum (Social amoeba).